The primary structure comprises 253 residues: Negative modulator of initiation of replication (253 aa).

Residues 66–112 (SNQEQQTGHGHAGEPSAVQTPESNDYAKAQPHSSGYQPGQLEGHKSE) form a disordered region. The tract at residues 154–155 (AV) is interaction with DNA.

It belongs to the SeqA family. In terms of assembly, homodimer. Polymerizes to form helical filaments.

The protein localises to the cytoplasm. Its function is as follows. Negative regulator of replication initiation, which contributes to regulation of DNA replication and ensures that replication initiation occurs exactly once per chromosome per cell cycle. Binds to pairs of hemimethylated GATC sequences in the oriC region, thus preventing assembly of replication proteins and re-initiation at newly replicated origins. Repression is relieved when the region becomes fully methylated. In Shewanella denitrificans (strain OS217 / ATCC BAA-1090 / DSM 15013), this protein is Negative modulator of initiation of replication.